The following is a 589-amino-acid chain: Intermediate filament protein B (589 aa).

The head stretch occupies residues S1–E84. An IF rod domain is found at E81 to V433. The tract at residues M85–L116 is coil 1A. The interval R117–Q130 is linker 1. Residues Y131 to L268 are coil 1B. The interval Q269–N285 is linker 12. The coil 2 stretch occupies residues E286–V433. The tract at residues G434–Q589 is tail. Positions H446–F470 are disordered. The LTD domain maps to T466–T584.

Belongs to the intermediate filament family. In terms of assembly, a and B can form homopolymers. Giant body muscle cells.

The protein localises to the cytoplasm. This Ascaris suum (Pig roundworm) protein is Intermediate filament protein B.